A 101-amino-acid polypeptide reads, in one-letter code: Replication restart protein PriB (101 aa).

Residues 1 to 101 (MATNHLVLSG…LHAENVELKT (101 aa)) enclose the SSB domain.

It belongs to the PriB family. As to quaternary structure, homodimer. Interacts with PriA and DnaT. Component of the replication restart primosome. Primosome assembly occurs via a 'hand-off' mechanism. PriA binds to replication forks, subsequently PriB then DnaT bind; DnaT then displaces ssDNA to generate the helicase loading substrate.

Functionally, involved in the restart of stalled replication forks, which reloads the replicative helicase on sites other than the origin of replication; the PriA-PriB pathway is the major replication restart pathway. During primosome assembly it facilitates complex formation between PriA and DnaT on DNA; stabilizes PriA on DNA. Stimulates the DNA unwinding activity of PriA helicase. This Shewanella sediminis (strain HAW-EB3) protein is Replication restart protein PriB.